Here is a 394-residue protein sequence, read N- to C-terminus: S-adenosylmethionine synthase 1 (394 aa).

E11 is a Mg(2+) binding site. An ATP-binding site is contributed by H17. E45 provides a ligand contact to K(+). L-methionine contacts are provided by E58 and Q101. ATP is bound by residues 169–171, 237–240, D248, 254–255, A271, K275, and K279; these read DGK, SGRF, and RK. Residue D248 coordinates L-methionine. K279 serves as a coordination point for L-methionine.

The protein belongs to the AdoMet synthase family. As to quaternary structure, homotetramer. The cofactor is Mn(2+). Mg(2+) serves as cofactor. It depends on Co(2+) as a cofactor. K(+) is required as a cofactor.

The protein resides in the cytoplasm. The catalysed reaction is L-methionine + ATP + H2O = S-adenosyl-L-methionine + phosphate + diphosphate. It participates in amino-acid biosynthesis; S-adenosyl-L-methionine biosynthesis; S-adenosyl-L-methionine from L-methionine: step 1/1. Its function is as follows. Catalyzes the formation of S-adenosylmethionine from methionine and ATP. The reaction comprises two steps that are both catalyzed by the same enzyme: formation of S-adenosylmethionine (AdoMet) and triphosphate, and subsequent hydrolysis of the triphosphate. The polypeptide is S-adenosylmethionine synthase 1 (SAM1) (Hordeum vulgare (Barley)).